The following is a 432-amino-acid chain: Trigger factor (432 aa).

A PPIase FKBP-type domain is found at 161–246 (DDRVTIDFVG…LKKIENMVLP (86 aa)).

This sequence belongs to the FKBP-type PPIase family. Tig subfamily.

The protein resides in the cytoplasm. It carries out the reaction [protein]-peptidylproline (omega=180) = [protein]-peptidylproline (omega=0). Its function is as follows. Involved in protein export. Acts as a chaperone by maintaining the newly synthesized protein in an open conformation. Functions as a peptidyl-prolyl cis-trans isomerase. This chain is Trigger factor, found in Haemophilus influenzae (strain PittEE).